The primary structure comprises 306 residues: SDS degradation transcriptional activation protein (306 aa).

The HTH lysR-type domain occupies 1 to 59 (MNDLRQLRHFVALAEHGHFARAAEAVNLSQPALSRSIQALENGLGCRLLDRGPRQVSLT). A DNA-binding region (H-T-H motif) is located at residues 19 to 38 (FARAAEAVNLSQPALSRSIQ).

The protein belongs to the LysR transcriptional regulatory family.

Activates the transcription of the sdsA gene for sodium dodecyl sulfate (SDS) degradation. The polypeptide is SDS degradation transcriptional activation protein (sdsB) (Pseudomonas sp. (strain ATCC 19151)).